Reading from the N-terminus, the 245-residue chain is Carboxy-S-adenosyl-L-methionine synthase (245 aa).

Residues Tyr42, 67–69, 92–93, 120–121, Asn135, and Arg202 contribute to the S-adenosyl-L-methionine site; these read GCS, DN, and DI.

Belongs to the class I-like SAM-binding methyltransferase superfamily. Cx-SAM synthase family. In terms of assembly, homodimer.

It catalyses the reaction prephenate + S-adenosyl-L-methionine = carboxy-S-adenosyl-L-methionine + 3-phenylpyruvate + H2O. Catalyzes the conversion of S-adenosyl-L-methionine (SAM) to carboxy-S-adenosyl-L-methionine (Cx-SAM). This chain is Carboxy-S-adenosyl-L-methionine synthase, found in Vibrio vulnificus (strain YJ016).